Consider the following 61-residue polypeptide: Sec-independent protein translocase protein TatA (61 aa).

A helical transmembrane segment spans residues 1–21; sequence MFGLGITEILLILGIIILIFG.

It belongs to the TatA/E family. As to quaternary structure, the Tat system comprises two distinct complexes: a TatABC complex, containing multiple copies of TatA, TatB and TatC subunits, and a separate TatA complex, containing only TatA subunits. Substrates initially bind to the TatABC complex, which probably triggers association of the separate TatA complex to form the active translocon.

Its subcellular location is the cell inner membrane. Its function is as follows. Part of the twin-arginine translocation (Tat) system that transports large folded proteins containing a characteristic twin-arginine motif in their signal peptide across membranes. TatA could form the protein-conducting channel of the Tat system. This Maridesulfovibrio salexigens (strain ATCC 14822 / DSM 2638 / NCIMB 8403 / VKM B-1763) (Desulfovibrio salexigens) protein is Sec-independent protein translocase protein TatA.